The following is a 461-amino-acid chain: UPF0210 protein Ddes_0622 (461 aa).

Belongs to the UPF0210 family. In terms of assembly, homodimer.

This is UPF0210 protein Ddes_0622 from Desulfovibrio desulfuricans (strain ATCC 27774 / DSM 6949 / MB).